A 290-amino-acid polypeptide reads, in one-letter code: MLKTIQDKARHRTRPLWAWLKLLWQRIDEDNMTTLAGNLAYVSLLSLVPLVAVVFALFAAFPMFSDVSIQLRHFIFANFLPATGDVIQRYIEQFVANSNKMTAVGACGLIVTALLLMYSIDSALNTIWRSKRARPKIYSFAVYWMILTLGPLLAGASLAISSYLFSLRWASDLNTVIDNVLRIFPLLLSWISFWLLYSIVPTIRVPNRDAIVGAFVAALLFEAGKKGFALYITMFPSYQLIYGVLAVIPILFVWVYWTWCIVLLGAEITVTLGEYRKLKQAAEQEEDDEP.

The next 6 membrane-spanning stretches (helical) occupy residues leucine 44–phenylalanine 64, valine 104–leucine 124, phenylalanine 140–isoleucine 160, isoleucine 183–isoleucine 203, alanine 210–leucine 230, and valine 244–leucine 264.

This sequence belongs to the UPF0761 family.

It is found in the cell inner membrane. The polypeptide is UPF0761 membrane protein YihY (Shigella sonnei (strain Ss046)).